Reading from the N-terminus, the 248-residue chain is N-acylneuraminate-9-phosphatase (248 aa).

Mg(2+) is bound at residue Asp-12. Phosphate contacts are provided by Leu-13, Asp-14, Thr-131, Asn-132, and Lys-164. Asp-14 contacts Mg(2+). Position 189 (Asp-189) interacts with Mg(2+).

Belongs to the HAD-like hydrolase superfamily. NANP family. Mg(2+) serves as cofactor.

It catalyses the reaction N-acetylneuraminate 9-phosphate + H2O = N-acetylneuraminate + phosphate. The enzyme catalyses N-glycoloylneuraminate 9-phosphate + H2O = N-glycoloylneuraminate + phosphate. Its pathway is amino-sugar metabolism; N-acetylneuraminate biosynthesis. Its activity is regulated as follows. Inhibited by calcium. Inhibited by vanadate, sodium orthovanadate and phosphonate. Functionally, catalyzes the dephosphorylation of N-acylneuraminate 9-phosphate (Neu5Ac-9-P) to N-acetylneuraminic acid (Neu5Ac or sialic acid). Can also use N-glycoloylneuraminate 9-phosphate as substrate. The sequence is that of N-acylneuraminate-9-phosphatase from Homo sapiens (Human).